A 610-amino-acid chain; its full sequence is Dihydroxy-acid dehydratase (610 aa).

D81 provides a ligand contact to Mg(2+). C122 provides a ligand contact to [2Fe-2S] cluster. Mg(2+) contacts are provided by D123 and K124. K124 carries the N6-carboxylysine modification. C193 contacts [2Fe-2S] cluster. Residue E489 participates in Mg(2+) binding. The Proton acceptor role is filled by S515.

It belongs to the IlvD/Edd family. In terms of assembly, homodimer. It depends on [2Fe-2S] cluster as a cofactor. The cofactor is Mg(2+).

The enzyme catalyses (2R)-2,3-dihydroxy-3-methylbutanoate = 3-methyl-2-oxobutanoate + H2O. It catalyses the reaction (2R,3R)-2,3-dihydroxy-3-methylpentanoate = (S)-3-methyl-2-oxopentanoate + H2O. It participates in amino-acid biosynthesis; L-isoleucine biosynthesis; L-isoleucine from 2-oxobutanoate: step 3/4. The protein operates within amino-acid biosynthesis; L-valine biosynthesis; L-valine from pyruvate: step 3/4. Functionally, functions in the biosynthesis of branched-chain amino acids. Catalyzes the dehydration of (2R,3R)-2,3-dihydroxy-3-methylpentanoate (2,3-dihydroxy-3-methylvalerate) into 2-oxo-3-methylpentanoate (2-oxo-3-methylvalerate) and of (2R)-2,3-dihydroxy-3-methylbutanoate (2,3-dihydroxyisovalerate) into 2-oxo-3-methylbutanoate (2-oxoisovalerate), the penultimate precursor to L-isoleucine and L-valine, respectively. In Xylella fastidiosa (strain M23), this protein is Dihydroxy-acid dehydratase.